Here is a 260-residue protein sequence, read N- to C-terminus: MTILSEIVKYKQSLLQNGYYQDKLNTLKSVKIQNKKSFINAIEKEPKLAIIAEIKSKSPTVNDLPERDLSQQISDYDQYGANAVSILTDEKYFGGSFERLQALTTKTTLPVLCKDFIIDPLQIDVAKQAGASMILLIVNILSDKQLKDLYNYAISQNLEVLVEVHDRHELERAYKVNAKLIGVNNRDLKRFVTNVEHTNTILENKKTNHYYISESGIHDASDVRKILHSGIDGLLIGEALMRCDNLSEFLPQLKMQKVKS.

This sequence belongs to the TrpC family.

The enzyme catalyses 1-(2-carboxyphenylamino)-1-deoxy-D-ribulose 5-phosphate + H(+) = (1S,2R)-1-C-(indol-3-yl)glycerol 3-phosphate + CO2 + H2O. It functions in the pathway amino-acid biosynthesis; L-tryptophan biosynthesis; L-tryptophan from chorismate: step 4/5. In Staphylococcus aureus (strain MSSA476), this protein is Indole-3-glycerol phosphate synthase.